A 252-amino-acid chain; its full sequence is UPF0714 protein YndL (252 aa).

A helical membrane pass occupies residues 33 to 51; sequence IVKLLMIFMVFTPISSIYA.

Belongs to the UPF0714 family.

It is found in the cell membrane. The polypeptide is UPF0714 protein YndL (yndL) (Bacillus subtilis (strain 168)).